Consider the following 213-residue polypeptide: Thiamine-phosphate synthase (213 aa).

4-amino-2-methyl-5-(diphosphooxymethyl)pyrimidine is bound by residues 42–46 (QYREK) and Asp-77. Residues Asp-78 and Asp-97 each contribute to the Mg(2+) site. 4-amino-2-methyl-5-(diphosphooxymethyl)pyrimidine is bound at residue Ser-116. 142–144 (TIS) is a 2-[(2R,5Z)-2-carboxy-4-methylthiazol-5(2H)-ylidene]ethyl phosphate binding site. Lys-145 contacts 4-amino-2-methyl-5-(diphosphooxymethyl)pyrimidine. Residues Gly-173 and 193–194 (IS) each bind 2-[(2R,5Z)-2-carboxy-4-methylthiazol-5(2H)-ylidene]ethyl phosphate.

Belongs to the thiamine-phosphate synthase family. Mg(2+) is required as a cofactor.

It catalyses the reaction 2-[(2R,5Z)-2-carboxy-4-methylthiazol-5(2H)-ylidene]ethyl phosphate + 4-amino-2-methyl-5-(diphosphooxymethyl)pyrimidine + 2 H(+) = thiamine phosphate + CO2 + diphosphate. The catalysed reaction is 2-(2-carboxy-4-methylthiazol-5-yl)ethyl phosphate + 4-amino-2-methyl-5-(diphosphooxymethyl)pyrimidine + 2 H(+) = thiamine phosphate + CO2 + diphosphate. It carries out the reaction 4-methyl-5-(2-phosphooxyethyl)-thiazole + 4-amino-2-methyl-5-(diphosphooxymethyl)pyrimidine + H(+) = thiamine phosphate + diphosphate. Its pathway is cofactor biosynthesis; thiamine diphosphate biosynthesis; thiamine phosphate from 4-amino-2-methyl-5-diphosphomethylpyrimidine and 4-methyl-5-(2-phosphoethyl)-thiazole: step 1/1. In terms of biological role, condenses 4-methyl-5-(beta-hydroxyethyl)thiazole monophosphate (THZ-P) and 2-methyl-4-amino-5-hydroxymethyl pyrimidine pyrophosphate (HMP-PP) to form thiamine monophosphate (TMP). The protein is Thiamine-phosphate synthase of Limosilactobacillus fermentum (strain NBRC 3956 / LMG 18251) (Lactobacillus fermentum).